The primary structure comprises 47 residues: Large ribosomal subunit protein bL34 (47 aa).

The segment at 1 to 47 is disordered; the sequence is MVTEGLKPHISIKKKKRKSGFLARMRTKSGRKIIARRRRKGRKRLAP. A compositionally biased stretch (basic residues) spans 10–47; the sequence is ISIKKKKRKSGFLARMRTKSGRKIIARRRRKGRKRLAP.

Belongs to the bacterial ribosomal protein bL34 family.

The sequence is that of Large ribosomal subunit protein bL34 (rpmH) from Aquifex aeolicus (strain VF5).